The following is a 128-amino-acid chain: CD59 glycoprotein (128 aa).

The first 25 residues, 1-25 (MGIQGGSVLFGLLLVLAVFCHSGNS), serve as a signal peptide directing secretion. The UPAR/Ly6 domain maps to 26-108 (LQCYSCPYPT…ALKNGGTTLS (83 aa)). 5 disulfides stabilise this stretch: Cys28–Cys51, Cys31–Cys38, Cys44–Cys64, Cys70–Cys88, and Cys89–Cys94. Asn43 carries an N-linked (GlcNAc...) asparagine glycan. A lipid anchor (GPI-anchor amidated asparagine) is attached at Asn102. Residues 103-128 (GGTTLSKKTVLLLVIPFLVAAWSLHP) constitute a propeptide, removed in mature form.

Interacts with T-cell surface antigen CD2. In terms of processing, N- and O-glycosylated.

It is found in the cell membrane. The protein localises to the secreted. Functionally, potent inhibitor of the complement membrane attack complex (MAC) action, which protects self-cells from damage during complement activation. Acts by binding to the beta-haipins of C8 (C8A and C8B) components of the assembling MAC, forming an intermolecular beta-sheet that prevents incorporation of the multiple copies of C9 required for complete formation of the osmolytic pore. The polypeptide is CD59 glycoprotein (Aotus trivirgatus (Three-striped night monkey)).